A 125-amino-acid polypeptide reads, in one-letter code: Fumarate reductase subunit D (125 aa).

3 helical membrane-spanning segments follow: residues 30 to 50 (FAML…LGVI), 62 to 82 (AFAT…LPMW), and 105 to 125 (VACY…IFMI).

This sequence belongs to the FrdD family. Part of an enzyme complex containing four subunits: a flavoprotein (FrdA), an iron-sulfur protein (FrdB), and two hydrophobic anchor proteins (FrdC and FrdD).

It is found in the cell inner membrane. In terms of biological role, anchors the catalytic components of the fumarate reductase complex to the cell membrane, binds quinones. In Vibrio parahaemolyticus serotype O3:K6 (strain RIMD 2210633), this protein is Fumarate reductase subunit D.